Here is a 92-residue protein sequence, read N- to C-terminus: Small ribosomal subunit protein uS19c (92 aa).

It belongs to the universal ribosomal protein uS19 family.

Its subcellular location is the plastid. Protein S19 forms a complex with S13 that binds strongly to the 16S ribosomal RNA. The sequence is that of Small ribosomal subunit protein uS19c from Cuscuta obtusiflora (Peruvian dodder).